The following is a 553-amino-acid chain: Efflux pump alnA (553 aa).

Over residues 1–21 (MSSDDTVKQEHSCSADSEKQD) the composition is skewed to basic and acidic residues. Positions 1 to 36 (MSSDDTVKQEHSCSADSEKQDSSCASDNEQPKEPQS) are disordered. Transmembrane regions (helical) follow at residues 40–60 (IHGL…FLFA), 85–105 (WSGV…LQIF), 110–130 (IKWM…ICGA), 136–156 (MLIG…VGVM), 174–194 (AMGL…GAFT), 202–222 (WSFY…IFLL), 243–263 (LVGT…INFA), 270–290 (SEPG…VFGI), 319–339 (LLFV…YVIP), 355–375 (VRLL…GYLA), 382–402 (IPWY…MYTI), 413–433 (GYSS…HAVA), and 522–542 (TYIL…GMKW).

This sequence belongs to the major facilitator superfamily. TCR/Tet family.

Its subcellular location is the cell membrane. Functionally, efflux pump; part of the gene cluster that mediates the biosynthesis of asperlin, a polyketide showing anti-inflammatory, antitumor and antibiotic activities. Is probably involved in the efflux of asperlin. The protein is Efflux pump alnA of Emericella nidulans (strain FGSC A4 / ATCC 38163 / CBS 112.46 / NRRL 194 / M139) (Aspergillus nidulans).